Here is a 96-residue protein sequence, read N- to C-terminus: Co-chaperonin GroES 2 (96 aa).

This sequence belongs to the GroES chaperonin family. In terms of assembly, heptamer of 7 subunits arranged in a ring. Interacts with the chaperonin GroEL.

It localises to the cytoplasm. Functionally, together with the chaperonin GroEL, plays an essential role in assisting protein folding. The GroEL-GroES system forms a nano-cage that allows encapsulation of the non-native substrate proteins and provides a physical environment optimized to promote and accelerate protein folding. GroES binds to the apical surface of the GroEL ring, thereby capping the opening of the GroEL channel. The chain is Co-chaperonin GroES 2 from Vibrio vulnificus (strain CMCP6).